Reading from the N-terminus, the 340-residue chain is Adenosine kinase (340 aa).

The active site involves Asp-292.

Belongs to the carbohydrate kinase PfkB family. Requires Mg(2+) as cofactor.

It carries out the reaction adenosine + ATP = AMP + ADP + H(+). It functions in the pathway purine metabolism; AMP biosynthesis via salvage pathway; AMP from adenosine: step 1/1. The chain is Adenosine kinase (ado1) from Schizosaccharomyces pombe (strain 972 / ATCC 24843) (Fission yeast).